We begin with the raw amino-acid sequence, 245 residues long: Biosynthetic peptidoglycan transglycosylase (245 aa).

The chain crosses the membrane as a helical span at residues 29 to 49 (LLVAFLILSLVLVATVSVINP).

The protein belongs to the glycosyltransferase 51 family.

Its subcellular location is the cell inner membrane. It catalyses the reaction [GlcNAc-(1-&gt;4)-Mur2Ac(oyl-L-Ala-gamma-D-Glu-L-Lys-D-Ala-D-Ala)](n)-di-trans,octa-cis-undecaprenyl diphosphate + beta-D-GlcNAc-(1-&gt;4)-Mur2Ac(oyl-L-Ala-gamma-D-Glu-L-Lys-D-Ala-D-Ala)-di-trans,octa-cis-undecaprenyl diphosphate = [GlcNAc-(1-&gt;4)-Mur2Ac(oyl-L-Ala-gamma-D-Glu-L-Lys-D-Ala-D-Ala)](n+1)-di-trans,octa-cis-undecaprenyl diphosphate + di-trans,octa-cis-undecaprenyl diphosphate + H(+). It functions in the pathway cell wall biogenesis; peptidoglycan biosynthesis. Functionally, peptidoglycan polymerase that catalyzes glycan chain elongation from lipid-linked precursors. The sequence is that of Biosynthetic peptidoglycan transglycosylase from Shewanella amazonensis (strain ATCC BAA-1098 / SB2B).